We begin with the raw amino-acid sequence, 258 residues long: MKITKIEKKKRLYLIELDNDDSLYVTEDTIVRFMLSKDKVLDNDQLEDMKHFAQLSYGKNLALYFLSFQQRSNKQVADYLRKHEIEEHIIADIITQLQEEQWIDDTKLADTYIRQNQLNGDKGPQVLKQKLLQKGIASHDIDPILSQTDFTQLAQKVSQKLFDKYQEKLPPKALKDKITQALLTKGFSYDLAKHSLNHLNFDQDNQEIEDLLDKELDKQYRKLSRKYDGYTLKQRLYQALYRKGYNSDDINCKLRNYL.

Belongs to the RecX family.

Its subcellular location is the cytoplasm. Its function is as follows. Modulates RecA activity. This is Regulatory protein RecX from Streptococcus pyogenes serotype M2 (strain MGAS10270).